The primary structure comprises 847 residues: uncharacterized protein (847 aa).

Residues 116–126 are compositionally biased toward polar residues; the sequence is TGSSELTTSKT. Disordered regions lie at residues 116–153, 208–245, and 361–392; these read TGSS…TPIE, LKNF…RLSP, and DLEK…SNVI. A compositionally biased stretch (basic and acidic residues) spans 128-145; that stretch reads IDVDTKEQENRLKQKAEA. Positions 368-378 are enriched in polar residues; that stretch reads SSSASLSTNKL.

This is an uncharacterized protein from Caenorhabditis elegans.